The chain runs to 330 residues: Phytanoyl-CoA hydroxylase-interacting protein (330 aa).

Residues 6 to 115 enclose the Fibronectin type-III domain; the sequence is TPHSIEVSNI…ETVEFCTGDY (110 aa). Residues N14 and N325 are each glycosylated (N-linked (GlcNAc...) asparagine).

The protein belongs to the PHYHIP family. As to quaternary structure, interacts with PHYH and ADGRB1.

Its function is as follows. Its interaction with PHYH suggests a role in the development of the central system. The polypeptide is Phytanoyl-CoA hydroxylase-interacting protein (PHYHIP) (Bos taurus (Bovine)).